We begin with the raw amino-acid sequence, 148 residues long: Snaclec crotocetin (148 aa).

Residues 1 to 23 form the signal peptide; sequence MGRLVFVSFGLLVVFLSLTGTGA. Intrachain disulfides connect cysteine 27/cysteine 38, cysteine 55/cysteine 144, and cysteine 121/cysteine 136. The 112-residue stretch at 34–145 folds into the C-type lectin domain; that stretch reads YEGHCYKVFK…CSKTHKVVCK (112 aa).

Belongs to the snaclec family. In terms of assembly, heterodimer; disulfide-linked. Expressed by the venom gland.

It is found in the secreted. Its function is as follows. Interferes with one step of hemostasis (modulation of platelet aggregation, or coagulation cascade, for example). In Crotalus durissus terrificus (South American rattlesnake), this protein is Snaclec crotocetin.